The sequence spans 229 residues: Putative N-acetylmannosamine-6-phosphate 2-epimerase (229 aa).

The protein belongs to the NanE family.

The enzyme catalyses an N-acyl-D-glucosamine 6-phosphate = an N-acyl-D-mannosamine 6-phosphate. It functions in the pathway amino-sugar metabolism; N-acetylneuraminate degradation; D-fructose 6-phosphate from N-acetylneuraminate: step 3/5. In terms of biological role, converts N-acetylmannosamine-6-phosphate (ManNAc-6-P) to N-acetylglucosamine-6-phosphate (GlcNAc-6-P). The polypeptide is Putative N-acetylmannosamine-6-phosphate 2-epimerase (Escherichia coli O157:H7).